The chain runs to 101 residues: Small ribosomal subunit protein uS14 (101 aa).

The interval 32-67 (SDAKRSDEEREAARLGLQKLPRNANPTRQRNRCEIT) is disordered. Residues 33 to 44 (DAKRSDEEREAA) show a composition bias toward basic and acidic residues.

It belongs to the universal ribosomal protein uS14 family. Part of the 30S ribosomal subunit. Contacts proteins S3 and S10.

Its function is as follows. Binds 16S rRNA, required for the assembly of 30S particles and may also be responsible for determining the conformation of the 16S rRNA at the A site. This is Small ribosomal subunit protein uS14 from Paracidovorax citrulli (strain AAC00-1) (Acidovorax citrulli).